The primary structure comprises 493 residues: Glutamyl-tRNA(Gln) amidotransferase subunit A (493 aa).

Residues Lys-79 and Ser-159 each act as charge relay system in the active site. The Acyl-ester intermediate role is filled by Ser-183.

Belongs to the amidase family. GatA subfamily. In terms of assembly, heterotrimer of A, B and C subunits.

It carries out the reaction L-glutamyl-tRNA(Gln) + L-glutamine + ATP + H2O = L-glutaminyl-tRNA(Gln) + L-glutamate + ADP + phosphate + H(+). Its function is as follows. Allows the formation of correctly charged Gln-tRNA(Gln) through the transamidation of misacylated Glu-tRNA(Gln) in organisms which lack glutaminyl-tRNA synthetase. The reaction takes place in the presence of glutamine and ATP through an activated gamma-phospho-Glu-tRNA(Gln). This is Glutamyl-tRNA(Gln) amidotransferase subunit A from Brucella ovis (strain ATCC 25840 / 63/290 / NCTC 10512).